Consider the following 421-residue polypeptide: Isocitrate dehydrogenase [NADP], mitochondrial (421 aa).

The N-terminal 8 residues, Ala1 to Tyr8, are a transit peptide targeting the mitochondrion. N6-acetyllysine occurs at positions 14, 17, 36, and 38. Lys49 and Lys75 each carry N6-acetyllysine; alternate. N6-succinyllysine; alternate is present on residues Lys49 and Lys75. Residues Thr84–Thr86 and Arg91 contribute to the NADP(+) site. Residue Thr86 participates in D-threo-isocitrate binding. D-threo-isocitrate is bound by residues Ser103–Arg109 and Arg118. Lys124 carries the post-translational modification N6-acetyllysine. Lys135 bears the N6-acetyllysine; alternate mark. Residue Lys135 is modified to N6-succinyllysine; alternate. Residue Arg141 participates in D-threo-isocitrate binding. N6-acetyllysine; alternate is present on residues Lys149 and Lys162. An N6-succinyllysine; alternate mark is found at Lys149 and Lys162. Residue Lys168 is modified to N6-acetyllysine. An N6-acetyllysine; alternate modification is found at Lys225. Position 225 is an N6-succinyllysine; alternate (Lys225). Lys232, Lys241, Lys244, and Lys249 each carry N6-acetyllysine. Lys251 is subject to N6-acetyllysine; alternate. Lys251 carries the post-translational modification N6-succinyllysine; alternate. Asp260 contacts Mn(2+). Position 268 (Lys268) interacts with NADP(+). Residue Asp283 coordinates Mn(2+). NADP(+) is bound by residues Gly318–His323 and Asn336. Lys353 bears the N6-acetyllysine; alternate mark. Lys353 carries the N6-succinyllysine; alternate modification. Lys369, Lys382, and Lys411 each carry N6-acetyllysine.

Belongs to the isocitrate and isopropylmalate dehydrogenases family. In terms of assembly, homodimer. Mg(2+) is required as a cofactor. The cofactor is Mn(2+). In terms of processing, acetylation at Lys-382 dramatically reduces catalytic activity. Deacetylated by SIRT3.

The protein resides in the mitochondrion. The enzyme catalyses D-threo-isocitrate + NADP(+) = 2-oxoglutarate + CO2 + NADPH. Plays a role in intermediary metabolism and energy production. It may tightly associate or interact with the pyruvate dehydrogenase complex. The protein is Isocitrate dehydrogenase [NADP], mitochondrial (IDH2) of Sus scrofa (Pig).